We begin with the raw amino-acid sequence, 389 residues long: Hsp70 nucleotide exchange factor FES1 (389 aa).

ARM repeat units lie at residues 95–134 (IDNANNMTSMKMWSPIISLLSAPEAEIQTAAAWIIGTAVQ), 137–176 (DKAQMAVLDFHPVAALLDLLHSHVDEVRAKAMYALSGLLK), and 179–218 (PAAMHQFDQLDGWNMLNMALVDPNLGLRRKTAFLINALLL). Residues 223–255 (SLDSQPASTSTATAIAPVSFTPPTPTAPPAPLE) form a disordered region. Residues 242–253 (FTPPTPTAPPAP) are compositionally biased toward pro residues. The stretch at 268–310 (PNVARALVQSNIINTLISSLLPAHTLPDTLSPPPTGANGDSDA) is one ARM 4 repeat.

The protein belongs to the FES1 family.

The protein localises to the cytoplasm. Functions as a nucleotide exchange factor (NEF) for Hsp70 chaperones which accelerates the release of ADP. Required for fully efficient Hsp70-mediated folding of proteins. The protein is Hsp70 nucleotide exchange factor FES1 (FES1) of Mycosarcoma maydis (Corn smut fungus).